A 344-amino-acid chain; its full sequence is L-rhamnose-proton symporter (344 aa).

The next 10 helical transmembrane spans lie at 4–24 (AITMGIFWHLIGAASAACFYA), 38–58 (WSVGGIVSWIILPWAISALLL), 68–88 (FSLSTLLPVFLFGAMWGIGNI), 101–121 (MGIGIAIGITLIVGTLMTPII), 137–157 (TLLGVLVALIGVGIVTRAGQL), 175–195 (LVLAVMCGIFSAGMSFAMNAA), 214–234 (LPSYVVIMGGGAIINLGFCFI), 259–279 (VLLSALGGLMWYLQFFFYAWG), 290–310 (ISWMLHMSFYVLCGGIVGLVL), and 323–343 (VLSLGCVVIIVAANIVGIGMA).

Belongs to the L-rhamnose transporter (TC 2.A.7.6) family.

The protein resides in the cell inner membrane. The catalysed reaction is L-rhamnopyranose(in) + H(+)(in) = L-rhamnopyranose(out) + H(+)(out). Functionally, uptake of L-rhamnose across the cytoplasmic membrane with the concomitant transport of protons into the cell (symport system). The chain is L-rhamnose-proton symporter from Escherichia coli O127:H6 (strain E2348/69 / EPEC).